We begin with the raw amino-acid sequence, 191 residues long: tRNA-specific adenosine deaminase 2 (191 aa).

Residues 20–145 (EETEKWMEQA…SVLDIASADL (126 aa)) form the CMP/dCMP-type deaminase domain. Zn(2+) is bound at residue histidine 71. Glutamate 73 (proton donor) is an active-site residue. The Zn(2+) site is built by cysteine 107 and cysteine 110.

This sequence belongs to the cytidine and deoxycytidylate deaminase family. ADAT2 subfamily. Requires Zn(2+) as cofactor.

The catalysed reaction is adenosine(34) in tRNA + H2O + H(+) = inosine(34) in tRNA + NH4(+). Functionally, probably participates in deamination of adenosine-34 to inosine in many tRNAs. In Bos taurus (Bovine), this protein is tRNA-specific adenosine deaminase 2 (DEADC1).